We begin with the raw amino-acid sequence, 397 residues long: Subtilisin-like serine protease Pen c 1 (397 aa).

A signal peptide spans 1–19 (MGFLKVLATSLATLAVVDA). Positions 20 to 115 (GTLLTASNTD…IEPDMIVNAT (96 aa)) are cleaved as a propeptide — removed in mature form. Positions 35–113 (SYIVVMNDDV…KYIEPDMIVN (79 aa)) constitute an Inhibitor I9 domain. Positions 125–397 (SWGLARISSK…SKLLYNGINV (273 aa)) constitute a Peptidase S8 domain. Residues aspartate 157, histidine 188, and serine 343 each act as charge relay system in the active site.

It belongs to the peptidase S8 family.

It is found in the secreted. With respect to regulation, inhibited by 0.1 mM diisopropyl fluorophosphate (DFP), phenylmethanesulfonyl fluoride (PMSF), chymostatin and elastatinal. Not inhibited by N-alpha-p-tosyl-L-lysine chloromethylketone (TLCK), N-tosyl-L-phenylalanyl chloromethyl ketone (TPCK) or N-carbobenzoxy-L-phenylalanine chloromethylketone (ZPCK). In terms of biological role, serine protease. Hydrolyzes azocasein. Cleaves peptide bonds of the oxidized insulin B chain preferably at 15-Leu-|-Tyr-16, but also at 4-Gln-|-His-5 and 24-Phe-|-Phe-25, and to a lesser extent at 5-His-|-Leu-6 and 25-Phe-|-Tyr-26. Hydrolyzes amide bonds between amino acids and 7-amino-4-methylcoumarin (AMC) in vitro. This Penicillium citrinum protein is Subtilisin-like serine protease Pen c 1.